A 330-amino-acid chain; its full sequence is Aspartate--ammonia ligase (330 aa).

Belongs to the class-II aminoacyl-tRNA synthetase family. AsnA subfamily.

Its subcellular location is the cytoplasm. The enzyme catalyses L-aspartate + NH4(+) + ATP = L-asparagine + AMP + diphosphate + H(+). It functions in the pathway amino-acid biosynthesis; L-asparagine biosynthesis; L-asparagine from L-aspartate (ammonia route): step 1/1. The polypeptide is Aspartate--ammonia ligase (Streptococcus pneumoniae serotype 19F (strain G54)).